The primary structure comprises 210 residues: Thymidylate kinase (210 aa).

An ATP-binding site is contributed by 9 to 16; it reads GPEGAGKT.

This sequence belongs to the thymidylate kinase family.

It catalyses the reaction dTMP + ATP = dTDP + ADP. Phosphorylation of dTMP to form dTDP in both de novo and salvage pathways of dTTP synthesis. This is Thymidylate kinase from Thermomicrobium roseum (strain ATCC 27502 / DSM 5159 / P-2).